Reading from the N-terminus, the 248-residue chain is Type II secretion system protein N (248 aa).

Topologically, residues M1–G6 are cytoplasmic. The helical; Signal-anchor for type II membrane protein transmembrane segment at I7–A27 threads the bilayer. Residues R28 to L248 are Periplasmic-facing.

The protein belongs to the GSP N family.

It is found in the cell inner membrane. Its function is as follows. Involved in a type II secretion system (T2SS, formerly general secretion pathway, GSP) for the export of proteins. Required for the translocation of the multiple pectic enzymes. This Pectobacterium carotovorum subsp. carotovorum (Erwinia carotovora subsp. carotovora) protein is Type II secretion system protein N (outN).